The following is a 264-amino-acid chain: Tryptophan synthase alpha chain (264 aa).

Active-site proton acceptor residues include Glu-49 and Asp-60.

The protein belongs to the TrpA family. Tetramer of two alpha and two beta chains.

The enzyme catalyses (1S,2R)-1-C-(indol-3-yl)glycerol 3-phosphate + L-serine = D-glyceraldehyde 3-phosphate + L-tryptophan + H2O. It participates in amino-acid biosynthesis; L-tryptophan biosynthesis; L-tryptophan from chorismate: step 5/5. The alpha subunit is responsible for the aldol cleavage of indoleglycerol phosphate to indole and glyceraldehyde 3-phosphate. This is Tryptophan synthase alpha chain from Lachnospira eligens (strain ATCC 27750 / DSM 3376 / VPI C15-48 / C15-B4) (Eubacterium eligens).